We begin with the raw amino-acid sequence, 173 residues long: Regulatory protein RecX (173 aa).

Belongs to the RecX family.

The protein localises to the cytoplasm. In terms of biological role, modulates RecA activity. This is Regulatory protein RecX from Mycobacterium marinum (strain ATCC BAA-535 / M).